A 102-amino-acid polypeptide reads, in one-letter code: Small ribosomal subunit protein uS10 (102 aa).

Belongs to the universal ribosomal protein uS10 family. In terms of assembly, part of the 30S ribosomal subunit.

Involved in the binding of tRNA to the ribosomes. This is Small ribosomal subunit protein uS10 from Methanospirillum hungatei JF-1 (strain ATCC 27890 / DSM 864 / NBRC 100397 / JF-1).